A 412-amino-acid polypeptide reads, in one-letter code: Inositol polyphosphate-5-phosphatase A (412 aa).

Residue C409 is the site of S-farnesyl cysteine attachment. The propeptide at 410–412 is removed in mature form; it reads VVQ.

It belongs to the inositol 1,4,5-trisphosphate 5-phosphatase type I family. As to quaternary structure, interacts with TASOR. In terms of processing, isoprenylation at Cys-409 is required for localization at the membrane.

The protein resides in the cell membrane. The protein localises to the cell projection. It localises to the dendrite. The catalysed reaction is 1D-myo-inositol 1,4,5-trisphosphate + H2O = 1D-myo-inositol 1,4-bisphosphate + phosphate. The enzyme catalyses 1D-myo-inositol 1,3,4,5-tetrakisphosphate + H2O = 1D-myo-inositol 1,3,4-trisphosphate + phosphate. Its activity is regulated as follows. Inhibited by EDTA and 2,3-bisphosphoglycerate. In terms of biological role, phosphatase that specifically hydrolyzes the 5-phosphate of inositol 1,4,5-trisphosphate to inositol 1,4-bisphosphate, and inositol 1,3,4,5-tetrasphosphate to inositol 1,3,4-trisphosphate. Plays a crucial role in the survival of cerebellar Purkinje cells. This Canis lupus familiaris (Dog) protein is Inositol polyphosphate-5-phosphatase A (INPP5A).